The primary structure comprises 452 residues: Protein CSN12 homolog (452 aa).

One can recognise a PCI domain in the interval 249-446 (VTFKYYEGVL…GFVVLSKSGA (198 aa)).

It belongs to the CSN12 family.

The polypeptide is Protein CSN12 homolog (csn-8) (Neurospora crassa (strain ATCC 24698 / 74-OR23-1A / CBS 708.71 / DSM 1257 / FGSC 987)).